The sequence spans 207 residues: NADH-quinone oxidoreductase subunit C (207 aa).

The protein belongs to the complex I 30 kDa subunit family. In terms of assembly, NDH-1 is composed of 14 different subunits. Subunits NuoB, C, D, E, F, and G constitute the peripheral sector of the complex.

The protein resides in the cell inner membrane. The catalysed reaction is a quinone + NADH + 5 H(+)(in) = a quinol + NAD(+) + 4 H(+)(out). Functionally, NDH-1 shuttles electrons from NADH, via FMN and iron-sulfur (Fe-S) centers, to quinones in the respiratory chain. The immediate electron acceptor for the enzyme in this species is believed to be ubiquinone. Couples the redox reaction to proton translocation (for every two electrons transferred, four hydrogen ions are translocated across the cytoplasmic membrane), and thus conserves the redox energy in a proton gradient. This Bordetella pertussis (strain Tohama I / ATCC BAA-589 / NCTC 13251) protein is NADH-quinone oxidoreductase subunit C.